Reading from the N-terminus, the 102-residue chain is RNA-binding protein Hfq (102 aa).

The region spanning 9–68 is the Sm domain; it reads DPFLNALRRERVPVSIYLVNGIKLQGQIESFDQFVILLKNTVSQMVYKHAISTVVPSRPV. Residues 65-102 form a disordered region; sequence SRPVSHHSSNTSVGASVGNYHSGGVSAPAAQQESDGTE. Polar residues predominate over residues 93 to 102; that stretch reads AAQQESDGTE.

The protein belongs to the Hfq family. As to quaternary structure, homohexamer.

Functionally, RNA chaperone that binds small regulatory RNA (sRNAs) and mRNAs to facilitate mRNA translational regulation in response to envelope stress, environmental stress and changes in metabolite concentrations. Also binds with high specificity to tRNAs. The sequence is that of RNA-binding protein Hfq from Photorhabdus laumondii subsp. laumondii (strain DSM 15139 / CIP 105565 / TT01) (Photorhabdus luminescens subsp. laumondii).